The primary structure comprises 117 residues: G antigen 5 (117 aa).

A disordered region spans residues 1–117 (MSWRGRSTYY…PEEGEKQSQC (117 aa)). 2 stretches are compositionally biased toward acidic residues: residues 32-45 (FSDE…EEGE) and 87-96 (ECEDGPDGQE). Basic and acidic residues predominate over residues 103–117 (EEVKTPEEGEKQSQC).

The protein belongs to the GAGE family. As to expression, expressed in a variety of tumor tissues but not in normal tissues, except testis.

In Homo sapiens (Human), this protein is G antigen 5 (GAGE5).